Consider the following 440-residue polypeptide: F-box protein pof12 (440 aa).

An F-box domain is found at 8-54; that stretch reads KNPASIFSHETLLHVLNDLSAHDLAALERVSRSWNSIVRRSSVWHNL.

In terms of assembly, interacts with skp1.

The protein localises to the nucleus. In Schizosaccharomyces pombe (strain 972 / ATCC 24843) (Fission yeast), this protein is F-box protein pof12 (pof12).